The following is a 141-amino-acid chain: Large ribosomal subunit protein uL11 (141 aa).

The protein belongs to the universal ribosomal protein uL11 family. In terms of assembly, part of the ribosomal stalk of the 50S ribosomal subunit. Interacts with L10 and the large rRNA to form the base of the stalk. L10 forms an elongated spine to which L12 dimers bind in a sequential fashion forming a multimeric L10(L12)X complex. One or more lysine residues are methylated.

Its function is as follows. Forms part of the ribosomal stalk which helps the ribosome interact with GTP-bound translation factors. The protein is Large ribosomal subunit protein uL11 of Dinoroseobacter shibae (strain DSM 16493 / NCIMB 14021 / DFL 12).